The primary structure comprises 317 residues: Protein-methionine-sulfoxide reductase catalytic subunit MsrP (317 aa).

Residues 1–40 constitute a signal peptide (tat-type signal); the sequence is MKKLTSNDVTPEEIFYQRRKIIKAFGLSAVATALPTFSFA. Residues Asn-71, 74-75, Cys-129, Thr-164, Asn-216, Arg-221, and 232-234 contribute to the Mo-molybdopterin site; these read YE and SIK.

It belongs to the MsrP family. In terms of assembly, heterodimer of a catalytic subunit (MsrP) and a heme-binding subunit (MsrQ). The cofactor is Mo-molybdopterin. In terms of processing, predicted to be exported by the Tat system. The position of the signal peptide cleavage has not been experimentally proven.

It is found in the periplasm. The catalysed reaction is L-methionyl-[protein] + a quinone + H2O = L-methionyl-(S)-S-oxide-[protein] + a quinol. It catalyses the reaction L-methionyl-[protein] + a quinone + H2O = L-methionyl-(R)-S-oxide-[protein] + a quinol. Its function is as follows. Part of the MsrPQ system that repairs oxidized periplasmic proteins containing methionine sulfoxide residues (Met-O), using respiratory chain electrons. Thus protects these proteins from oxidative-stress damage caused by reactive species of oxygen and chlorine generated by the host defense mechanisms. MsrPQ is essential for the maintenance of envelope integrity under bleach stress, rescuing a wide series of structurally unrelated periplasmic proteins from methionine oxidation. The catalytic subunit MsrP is non-stereospecific, being able to reduce both (R-) and (S-) diastereoisomers of methionine sulfoxide. This Histophilus somni (strain 2336) (Haemophilus somnus) protein is Protein-methionine-sulfoxide reductase catalytic subunit MsrP.